The sequence spans 261 residues: uncharacterized protein (261 aa).

Positions 1 to 22 (MRDSKRVVLYISIMVLSIFIIG) are cleaved as a signal peptide. Residue C23 is the site of N-palmitoyl cysteine attachment. C23 carries S-diacylglycerol cysteine lipidation.

The protein belongs to the staphylococcal tandem lipoprotein family.

The protein localises to the cell membrane. This is an uncharacterized protein from Staphylococcus aureus (strain N315).